The chain runs to 476 residues: Homeobox even-skipped homolog protein 2 (476 aa).

2 disordered regions span residues 82-113 (TGSE…AEAD) and 142-185 (KGYA…GSGA). Low complexity-rich tracts occupy residues 84–96 (SEST…SSAA) and 147–159 (SGSA…SASG). The span at 160 to 183 (SGLGSLHGGSGGSGGSAALGGSGS) shows a compositional bias: gly residues. Positions 188–247 (VRRYRTAFTREQIARLEKEFYRENYVSRPRRCELAAALNLPETTIKVWFQNRRMKDKRQR) form a DNA-binding region, homeobox.

The protein belongs to the even-skipped homeobox family.

The protein localises to the nucleus. This Homo sapiens (Human) protein is Homeobox even-skipped homolog protein 2 (EVX2).